The sequence spans 67 residues: ATP synthase F(0) complex subunit 8 (67 aa).

A helical membrane pass occupies residues 8-24; it reads TWFTTILSTSFSIIHRL. Lysine 54 carries the N6-acetyllysine; alternate modification. Lysine 54 carries the N6-succinyllysine; alternate modification. Residue lysine 57 is modified to N6-acetyllysine.

It belongs to the ATPase protein 8 family. As to quaternary structure, component of the ATP synthase complex composed at least of ATP5F1A/subunit alpha, ATP5F1B/subunit beta, ATP5MC1/subunit c (homooctomer), MT-ATP6/subunit a, MT-ATP8/subunit 8, ATP5ME/subunit e, ATP5MF/subunit f, ATP5MG/subunit g, ATP5MK/subunit k, ATP5MJ/subunit j, ATP5F1C/subunit gamma, ATP5F1D/subunit delta, ATP5F1E/subunit epsilon, ATP5PF/subunit F6, ATP5PB/subunit b, ATP5PD/subunit d, ATP5PO/subunit OSCP. ATP synthase complex consists of a soluble F(1) head domain (subunits alpha(3) and beta(3)) - the catalytic core - and a membrane F(0) domain - the membrane proton channel (subunits c, a, 8, e, f, g, k and j). These two domains are linked by a central stalk (subunits gamma, delta, and epsilon) rotating inside the F1 region and a stationary peripheral stalk (subunits F6, b, d, and OSCP). Interacts with PRICKLE3.

The protein localises to the mitochondrion membrane. Its function is as follows. Subunit 8, of the mitochondrial membrane ATP synthase complex (F(1)F(0) ATP synthase or Complex V) that produces ATP from ADP in the presence of a proton gradient across the membrane which is generated by electron transport complexes of the respiratory chain. ATP synthase complex consist of a soluble F(1) head domain - the catalytic core - and a membrane F(1) domain - the membrane proton channel. These two domains are linked by a central stalk rotating inside the F(1) region and a stationary peripheral stalk. During catalysis, ATP synthesis in the catalytic domain of F(1) is coupled via a rotary mechanism of the central stalk subunits to proton translocation. In vivo, can only synthesize ATP although its ATP hydrolase activity can be activated artificially in vitro. Part of the complex F(0) domain. The sequence is that of ATP synthase F(0) complex subunit 8 from Glis glis (Fat dormouse).